Here is a 301-residue protein sequence, read N- to C-terminus: Probable alpha-L-glutamate ligase (301 aa).

The region spanning 104 to 287 is the ATP-grasp domain; sequence LQLLSRRGIG…VAGMIIGYLE (184 aa). Residues K141, 178–179, D187, and 211–213 contribute to the ATP site; these read EY and RSN. Residues D248, E260, and N262 each coordinate Mg(2+). Mn(2+) is bound by residues D248, E260, and N262.

Belongs to the RimK family. It depends on Mg(2+) as a cofactor. Requires Mn(2+) as cofactor.

This is Probable alpha-L-glutamate ligase from Pseudomonas syringae pv. syringae (strain B728a).